The sequence spans 130 residues: Follitropin subunit beta (130 aa).

An N-terminal signal peptide occupies residues 1–20 (MMKLIQLCILFWCWRAICCH). 6 disulfide bridges follow: C22-C70, C36-C85, C39-C123, C47-C101, C51-C103, and C106-C113. N-linked (GlcNAc...) asparagine glycans are attached at residues N26 and N43.

It belongs to the glycoprotein hormones subunit beta family. As to quaternary structure, heterodimer. The active follitropin is a heterodimer composed of an alpha chain/CGA shared with other hormones and a unique beta chain/FSHB shown here.

The protein resides in the secreted. Together with the alpha chain CGA constitutes follitropin, the follicle-stimulating hormone, and provides its biological specificity to the hormone heterodimer. Binds FSHR, a G protein-coupled receptor, on target cells to activate downstream signaling pathways. Follitropin is involved in follicle development and spermatogenesis in reproductive organs. The polypeptide is Follitropin subunit beta (Fshb) (Mus musculus (Mouse)).